Consider the following 306-residue polypeptide: Pantothenate kinase (306 aa).

91-98 (GSVAVGKS) lines the ATP pocket.

The protein belongs to the prokaryotic pantothenate kinase family.

The protein resides in the cytoplasm. The enzyme catalyses (R)-pantothenate + ATP = (R)-4'-phosphopantothenate + ADP + H(+). It participates in cofactor biosynthesis; coenzyme A biosynthesis; CoA from (R)-pantothenate: step 1/5. This Streptococcus pyogenes serotype M1 protein is Pantothenate kinase (coaA).